Reading from the N-terminus, the 174-residue chain is MAPPPPSPPAVSLKVLLLLLRVLTGVFLVIALIILSTNSVTIVSQGSALKFHFKDVYAYRYMLSAAVIGLVYAVIQLFFTISEFATGVKNPFNYQLDFYGDKLISYLVATGSAAGFGVTKDLKDTFLALVALDSTDPVDKFFSKGYASASLLLFAFICLAVLSVFSSFAMAKRN.

Residues 1 to 14 (MAPPPPSPPAVSLK) lie on the Cytoplasmic side of the membrane. A helical membrane pass occupies residues 15 to 35 (VLLLLLRVLTGVFLVIALIIL). Topologically, residues 36–60 (STNSVTIVSQGSALKFHFKDVYAYR) are extracellular. Residues 61–81 (YMLSAAVIGLVYAVIQLFFTI) traverse the membrane as a helical segment. Residues 82-97 (SEFATGVKNPFNYQLD) are Cytoplasmic-facing. The helical transmembrane segment at 98–118 (FYGDKLISYLVATGSAAGFGV) threads the bilayer. At 119 to 150 (TKDLKDTFLALVALDSTDPVDKFFSKGYASAS) the chain is on the extracellular side. The helical transmembrane segment at 151–171 (LLLFAFICLAVLSVFSSFAMA) threads the bilayer. The Cytoplasmic segment spans residues 172–174 (KRN).

This sequence belongs to the Casparian strip membrane proteins (CASP) family. As to quaternary structure, homodimer and heterodimers.

Its subcellular location is the cell membrane. The protein is CASP-like protein 4D2 of Arabidopsis thaliana (Mouse-ear cress).